We begin with the raw amino-acid sequence, 187 residues long: Probable RNA 2'-phosphotransferase (187 aa).

It belongs to the KptA/TPT1 family.

In terms of biological role, removes the 2'-phosphate from RNA via an intermediate in which the phosphate is ADP-ribosylated by NAD followed by a presumed transesterification to release the RNA and generate ADP-ribose 1''-2''-cyclic phosphate (APPR&gt;P). May function as an ADP-ribosylase. This chain is Probable RNA 2'-phosphotransferase, found in Pseudomonas syringae pv. tomato (strain ATCC BAA-871 / DC3000).